Here is a 294-residue protein sequence, read N- to C-terminus: tRNA dimethylallyltransferase (294 aa).

Position 10-17 (10-17 (GPTAVGKT)) interacts with ATP. 12 to 17 (TAVGKT) lines the substrate pocket. The interaction with substrate tRNA stretch occupies residues 35–38 (DSQQ).

It belongs to the IPP transferase family. In terms of assembly, monomer. Mg(2+) is required as a cofactor.

The enzyme catalyses adenosine(37) in tRNA + dimethylallyl diphosphate = N(6)-dimethylallyladenosine(37) in tRNA + diphosphate. Its function is as follows. Catalyzes the transfer of a dimethylallyl group onto the adenine at position 37 in tRNAs that read codons beginning with uridine, leading to the formation of N6-(dimethylallyl)adenosine (i(6)A). This chain is tRNA dimethylallyltransferase, found in Streptococcus suis (strain 98HAH33).